We begin with the raw amino-acid sequence, 1200 residues long: MNRLLQKGTSLVPSWRTRGCRYRRCSYAPQLHAKPLEMETSQRRMNPLNIQMLSKGFHEQIFRGKQVQHAEEDVQRSITHLKNHELWGQETSTVPDVELQLPKMYGNNIEEHFQILAQKQSLPYLEAANDLLNCQLPAMPQTWAWQSGWTRYTATGEKELVDFPDEKAMVFDVEVCVTEGCCPTLAVAASPQNWYSWCSRRLIEGRYTWSKELLLSDLFPLETSMNCNYMTKNNWTERLVVGHNVSFDRAHIKEQYLIKGSKTRFMDTMSMHMAISGLTGFQRTLWMASKYGKKKGLQEVKQHIKKTRSNFSGSPISSWDWVNISSINNLADVHALYVGGPPLEKEARELFVKGSMSDIRTEFQELMRYCALDVQATHEVFQEQFPLFMERCPHPVTLSGMLEMGVSYLPVNQNWERYLDEAQTSYEELQKEMKKSLMKLANDACQLLTKDAYKEDPWLWDLEWDIQESKQKKTKISKKQKKANEAAESVGNKLVEDHNEDPGPPTEKEESRPSMGKLYLEDLKLKTLPLLPKRNQHLPGHPGWYRKLCPKLEDPDWLPGPGLISLQMRLTPKLMRLTWDGYPLHYSEKHGWGYLVPGRKNNKLNNEEEEEIIPCPYRAIEDIYAEYSKNKTKDGCLSQHSTIPEEFMLTDDNSMWQKVEELSRTEMDLSSEVPATAKAKKRNNSSEHPVKLEMEFDSLPDNHHGNSPCGDVNVSGCWFYKLPHKDGNANNVGSPFAKDFLPKMEDGTLQASTGDSSATRALEINKMISFWRNAHKRISSQMVVWMKKNELHRTITRDPEFDEENKYGAILAQVVSAGTITRRAVEPTWLTASNARADRVGSELKAMVQVPPGYHLIGADVDSQELWIAAILGEAHFAGIHGCTAFGWMTLQGKKSSGTDLHSKTASTVGISREHAKVFNYGRIYGAGQPFAERLLMQFNHRLTQEQAAEKAKQMYAVTKGIRRYILSKEGEWLVEELGISVERGEENSVNLQDLRKIQKDATKRSRRKWNLVSRRIWTGGTESQMFNKLETIAMSPSPKTPVLGCRISRALEPTAVKGEFITSRVNWVVQSSAVDYLHLMLVAMKWLFEAYDIDGRFCISIHDEVRYLVHSKDRYRAALALQITNLLTRCMFASRLGIQDVPQSVAFFSAVDIDKCLRKEVTMDCSTPSNPNGMEKRYGIPQGEALDIYQILKVTKGVL.

Disordered regions lie at residues 471–515 and 667–688; these read QKKT…RPSM and MDLSSEVPATAKAKKRNNSSEH. Over residues 472–481 the composition is skewed to basic residues; that stretch reads KKTKISKKQK. The span at 494 to 512 shows a compositional bias: basic and acidic residues; it reads LVEDHNEDPGPPTEKEESR.

The protein belongs to the DNA polymerase type-A family. As to quaternary structure, heterotrimer composed of a catalytic subunit and a homodimer of accessory subunits. Mg(2+) serves as cofactor.

The protein resides in the mitochondrion. It is found in the mitochondrion matrix. It localises to the mitochondrion nucleoid. The catalysed reaction is DNA(n) + a 2'-deoxyribonucleoside 5'-triphosphate = DNA(n+1) + diphosphate. Functionally, involved in the replication of mitochondrial DNA. Associates with mitochondrial DNA. This is DNA polymerase subunit gamma-1 (polg) from Xenopus laevis (African clawed frog).